The following is an 86-amino-acid chain: Protein Vpu (86 aa).

Over Met1–Gly8 the chain is Extracellular. Residues Leu9–Lys29 form a helical membrane-spanning segment. Topologically, residues Leu30–Asn86 are cytoplasmic. 2 positions are modified to phosphoserine; by host CK2: Ser54 and Ser58.

This sequence belongs to the HIV-1 VPU protein family. As to quaternary structure, homopentamer. Interacts with host CD4 and BRTC; these interactions induce proteasomal degradation of CD4. Interacts with host BST2; this interaction leads to the degradation of host BST2. Interacts with host FBXW11. Interacts with host AP1M1; this interaction plays a role in the mistrafficking and subsequent degradation of host BST2. Interacts with host RANBP2; this interaction allows Vpu to down-regulate host BLM sumoylation. Forms pentamers or hexamers. Interacts with host CD4 and BRTC; these interactions induce proteasomal degradation of CD4. Interacts with host BST2; this interaction leads to the degradation of host BST2. Interacts with host FBXW11. Interacts with host AP1M1; this interaction plays a role in the mistrafficking and subsequent degradation of host BST2. In terms of processing, phosphorylated by host CK2. This phosphorylation is necessary for interaction with human BTRC and degradation of CD4.

It localises to the host membrane. With respect to regulation, ion channel activity is inhibited by hexamethylene amiloride in vitro. Its function is as follows. Enhances virion budding by targeting host CD4 and Tetherin/BST2 to proteasome degradation. Degradation of CD4 prevents any unwanted premature interactions between viral Env and its host receptor CD4 in the endoplasmic reticulum. Degradation of antiretroviral protein Tetherin/BST2 is important for virion budding, as BST2 tethers new viral particles to the host cell membrane. Mechanistically, Vpu bridges either CD4 or BST2 to BTRC, a substrate recognition subunit of the Skp1/Cullin/F-box protein E3 ubiquitin ligase, induces their ubiquitination and subsequent proteasomal degradation. The alteration of the E3 ligase specificity by Vpu seems to promote the degradation of host IKBKB, leading to NF-kappa-B down-regulation and subsequent apoptosis. Acts as a viroporin that forms an oligomeric ion channel in membranes. Modulates the host DNA repair mechanisms to promote degradation of nuclear viral cDNA in cells that are already productively infected in order to suppress immune sensing and proviral hyper-integration (superinfection). Manipulates PML-NBs and modulates SUMOylation of host BLM protein thereby enhancing its DNA-end processing activity toward viral unintegrated linear DNA. Also inhibits RAD52-mediated homologous repair of viral cDNA, preventing the generation of dead-end circular forms of single copies of the long terminal repeat and permitting sustained nucleolytic attack. This Pan troglodytes (Chimpanzee) protein is Protein Vpu.